We begin with the raw amino-acid sequence, 152 residues long: Calmodulin-like protein 2 (152 aa).

EF-hand domains lie at 1-36 (MDRGELSRVFQMFDKNGDGKIAKNELKDFFKSVGIM), 37-72 (VPENEINEMIAKMDVNGDGAMDIDEFGSLYQEMVEE), 74-109 (EEEEDMREAFRVFDQNGDGFITDEELRSVLASMGLK), and 112-147 (RTLEDCKKMISKVDVDGDGMVNFKEFKQMMRGGGFA). Residues Asp-14, Asn-16, Asp-18, Lys-20, Glu-25, Asp-50, Asn-52, Asp-54, Glu-61, Asp-87, Asn-89, Asp-91, Glu-98, Asp-125, Asp-127, Asp-129, Met-131, and Glu-136 each coordinate Ca(2+).

Belongs to the calmodulin family.

Its function is as follows. Potential calcium sensor that is required for pollen tube attraction for ovule fertilization. The chain is Calmodulin-like protein 2 (CML2) from Arabidopsis thaliana (Mouse-ear cress).